The primary structure comprises 23 residues: Ascaphin-1 (23 aa).

At N23 the chain carries Asparagine amide.

Expressed by the skin glands.

Its subcellular location is the secreted. Its function is as follows. Antimicrobial peptide that shows higher potency against Gram-negative bacteria than against Gram-positive bacteria. Has a very week hemolytic activity. In Ascaphus truei (Coastal tailed frog), this protein is Ascaphin-1.